We begin with the raw amino-acid sequence, 161 residues long: MTKLNELAPREGSTKGRMRVGRGPGSGKGKTAGRGVKGQKARSGVAINGFEGGQMPLHMRMPKRGFNNPFRLEFAEVNLWRLEQAVEAGKIKKGAELDAAALIAAGVIRRELDGVKLLAKGEIKTALKLTVYSATEAAIKAVEAAGGSVTVTKKAKAQAEA.

A disordered region spans residues 1-39; it reads MTKLNELAPREGSTKGRMRVGRGPGSGKGKTAGRGVKGQ. Positions 22-36 are enriched in gly residues; it reads RGPGSGKGKTAGRGV.

Belongs to the universal ribosomal protein uL15 family. As to quaternary structure, part of the 50S ribosomal subunit.

Its function is as follows. Binds to the 23S rRNA. The chain is Large ribosomal subunit protein uL15 from Caulobacter vibrioides (strain ATCC 19089 / CIP 103742 / CB 15) (Caulobacter crescentus).